A 137-amino-acid chain; its full sequence is Ribonuclease P protein component (137 aa).

This sequence belongs to the RnpA family. In terms of assembly, consists of a catalytic RNA component (M1 or rnpB) and a protein subunit.

It carries out the reaction Endonucleolytic cleavage of RNA, removing 5'-extranucleotides from tRNA precursor.. In terms of biological role, RNaseP catalyzes the removal of the 5'-leader sequence from pre-tRNA to produce the mature 5'-terminus. It can also cleave other RNA substrates such as 4.5S RNA. The protein component plays an auxiliary but essential role in vivo by binding to the 5'-leader sequence and broadening the substrate specificity of the ribozyme. The protein is Ribonuclease P protein component of Porphyromonas gingivalis (strain ATCC 33277 / DSM 20709 / CIP 103683 / JCM 12257 / NCTC 11834 / 2561).